We begin with the raw amino-acid sequence, 242 residues long: Biosynthetic peptidoglycan transglycosylase (242 aa).

The chain crosses the membrane as a helical span at residues 19–39 (LMVVLAIFWGGGIALFSVAPV).

It belongs to the glycosyltransferase 51 family.

It localises to the cell inner membrane. It carries out the reaction [GlcNAc-(1-&gt;4)-Mur2Ac(oyl-L-Ala-gamma-D-Glu-L-Lys-D-Ala-D-Ala)](n)-di-trans,octa-cis-undecaprenyl diphosphate + beta-D-GlcNAc-(1-&gt;4)-Mur2Ac(oyl-L-Ala-gamma-D-Glu-L-Lys-D-Ala-D-Ala)-di-trans,octa-cis-undecaprenyl diphosphate = [GlcNAc-(1-&gt;4)-Mur2Ac(oyl-L-Ala-gamma-D-Glu-L-Lys-D-Ala-D-Ala)](n+1)-di-trans,octa-cis-undecaprenyl diphosphate + di-trans,octa-cis-undecaprenyl diphosphate + H(+). It functions in the pathway cell wall biogenesis; peptidoglycan biosynthesis. Functionally, peptidoglycan polymerase that catalyzes glycan chain elongation from lipid-linked precursors. The chain is Biosynthetic peptidoglycan transglycosylase from Escherichia coli O45:K1 (strain S88 / ExPEC).